We begin with the raw amino-acid sequence, 78 residues long: Translation initiation factor IF-1, chloroplastic (78 aa).

The 72-residue stretch at 1–72 (MEKQKLIDME…TKGRITYRLR (72 aa)) folds into the S1-like domain.

This sequence belongs to the IF-1 family. Component of the 30S ribosomal translation pre-initiation complex which assembles on the 30S ribosome in the order IF-2 and IF-3, IF-1 and N-formylmethionyl-tRNA(fMet); mRNA recruitment can occur at any time during PIC assembly.

The protein resides in the plastid. Its subcellular location is the chloroplast. In terms of biological role, one of the essential components for the initiation of protein synthesis. Stabilizes the binding of IF-2 and IF-3 on the 30S subunit to which N-formylmethionyl-tRNA(fMet) subsequently binds. Helps modulate mRNA selection, yielding the 30S pre-initiation complex (PIC). Upon addition of the 50S ribosomal subunit IF-1, IF-2 and IF-3 are released leaving the mature 70S translation initiation complex. The polypeptide is Translation initiation factor IF-1, chloroplastic (Marchantia polymorpha (Common liverwort)).